A 221-amino-acid polypeptide reads, in one-letter code: Endo-1,4-beta-xylanase I (221 aa).

An N-terminal signal peptide occupies residues 1 to 30 (MVSFTSIITAAVAATGALAAPATDVSLVAR). Positions 31–219 (QNTPNGEGTH…STGNAQITVN (189 aa)) constitute a GH11 domain. Glutamate 115 acts as the Nucleophile in catalysis. The interval 126 to 157 (DPSSQSQNKGTVTSDGSSYKIAQSTRTNQPSI) is disordered. Glutamate 206 serves as the catalytic Proton donor.

The protein belongs to the glycosyl hydrolase 11 (cellulase G) family. In terms of processing, the N-terminus is blocked.

It localises to the secreted. The enzyme catalyses Endohydrolysis of (1-&gt;4)-beta-D-xylosidic linkages in xylans.. Its pathway is glycan degradation; xylan degradation. Major xylan-degrading enzyme. Contributes to the hydrolysis of arabinoxylan, the major component of maize cell-walls. This Cochliobolus carbonum (Maize leaf spot fungus) protein is Endo-1,4-beta-xylanase I (XYL1).